Reading from the N-terminus, the 472-residue chain is Dihydrolipoyl dehydrogenase 2 (472 aa).

Residues 39–47 (ERDAYGGTC), Lys-56, and Ala-118 contribute to the FAD site. The cysteines at positions 47 and 52 are disulfide-linked. Residues 186-190 (GAGYI), Glu-209, and 275-278 (AVGR) each bind NAD(+). FAD-binding residues include Asp-318 and Ala-326. The active-site Proton acceptor is the His-450.

It belongs to the class-I pyridine nucleotide-disulfide oxidoreductase family. In terms of assembly, homodimer. The cofactor is FAD.

The protein resides in the cytoplasm. It catalyses the reaction N(6)-[(R)-dihydrolipoyl]-L-lysyl-[protein] + NAD(+) = N(6)-[(R)-lipoyl]-L-lysyl-[protein] + NADH + H(+). The chain is Dihydrolipoyl dehydrogenase 2 (lpdA2) from Haloarcula marismortui (strain ATCC 43049 / DSM 3752 / JCM 8966 / VKM B-1809) (Halobacterium marismortui).